The chain runs to 398 residues: Putative F-box protein At3g17620 (398 aa).

The region spanning 1 to 45 (MMSDLPRDLLEERLSRVPVKSLREARFTCKNWKTLSKKRSFTKKH) is the F-box domain.

This Arabidopsis thaliana (Mouse-ear cress) protein is Putative F-box protein At3g17620.